The primary structure comprises 526 residues: MLO-like protein 1 (526 aa).

Over 1–11 (MGHGGEGMSLE) the chain is Extracellular. Residues 12–32 (FTPTWVVAGVCTVIVAISLAV) traverse the membrane as a helical segment. The Cytoplasmic segment spans residues 33–61 (ERLLHYFGTVLKKKKQKPLYEALQKVKEE). The chain crosses the membrane as a helical span at residues 62 to 82 (LMLLGFISLLLTVFQGLISKF). At 83-160 (CVKENVLMHM…LSLEALHHLH (78 aa)) the chain is on the extracellular side. A helical membrane pass occupies residues 161–181 (IFIFVLAISHVTFCVLTVIFG). Residues 182 to 287 (STRIHQWKKW…MRALEDDFKQ (106 aa)) are Cytoplasmic-facing. 2 helical membrane passes run 288–308 (VVGI…LNVN) and 309–329 (GWHT…AVGT). At 330-372 (KLEHVIAQLAHEVAEKHVAIEGDLVVKPSDEHFWFSKPQIVLY) the chain is on the cytoplasmic side. The helical transmembrane segment at 373–393 (LIHFILFQNAFEIAFFFWIWV) threads the bilayer. Residues 394–412 (TYGFDSCIMGQVRYIVPRL) are Extracellular-facing. The helical transmembrane segment at 413–433 (VIGVFIQVLCSYSTLPLYAIV) threads the bilayer. At 434 to 526 (SQMGSSFKKA…NNEITPDHNN (93 aa)) the chain is on the cytoplasmic side. Positions 447–468 (ENVQVGLVGWAQKVKQKRDLKA) are calmodulin-binding. Residues 471 to 526 (SNGDEGSSQAGPGPDSGSGSAPAAGPGAGFAGIQLSRVTRNNAGDTNNEITPDHNN) form a disordered region. Over residues 476-495 (GSSQAGPGPDSGSGSAPAAG) the composition is skewed to low complexity. Residues 506–520 (SRVTRNNAGDTNNEI) show a composition bias toward polar residues.

The protein belongs to the MLO family.

The protein resides in the cell membrane. In terms of biological role, may be involved in modulation of pathogen defense and leaf cell death. Activity seems to be regulated by Ca(2+)-dependent calmodulin binding and seems not to require heterotrimeric G proteins. The polypeptide is MLO-like protein 1 (MLO1) (Arabidopsis thaliana (Mouse-ear cress)).